A 406-amino-acid chain; its full sequence is Kelch domain-containing protein 1 (406 aa).

6 Kelch repeats span residues 24-76 (FLYV…CGAC), 80-134 (RLYV…VYKD), 135-181 (RLIY…TKTR), 208-258 (KGYV…AITD), 260-307 (KLFL…ACLG), and 311-361 (EIMV…LKSQ).

As to quaternary structure, component of a CRL5 E3 ubiquitin-protein ligase complex, also named ECS (Elongin BC-CUL2/5-SOCS-box protein) complex, composed of CUL5, Elongin BC (ELOB and ELOC), RBX1 and substrate-specific adapter KLHDC1.

Its subcellular location is the cytoplasm. It is found in the cytosol. It participates in protein modification; protein ubiquitination. Functionally, substrate-recognition component of a Cul5-RING (CRL5) E3 ubiquitin-protein ligase complex of the DesCEND (destruction via C-end degrons) pathway, which recognizes a C-degron located at the extreme C terminus of target proteins, leading to their ubiquitination and degradation. The C-degron recognized by the DesCEND pathway is usually a motif of less than ten residues and can be present in full-length proteins, truncated proteins or proteolytically cleaved forms. The CRL5(KLHDC1) complex mediates ubiquitination and degradation of truncated SELENOS selenoprotein produced by failed UGA/Sec decoding, which ends with a glycine. The protein is Kelch domain-containing protein 1 of Mus musculus (Mouse).